The chain runs to 137 residues: Small ribosomal subunit protein uS12 (137 aa).

Disordered stretches follow at residues 1–21 (MPTI…KSDS) and 34–57 (VHTK…TPKK). 3-methylthioaspartic acid is present on D102.

This sequence belongs to the universal ribosomal protein uS12 family. Part of the 30S ribosomal subunit. Contacts proteins S8 and S17. May interact with IF1 in the 30S initiation complex.

In terms of biological role, with S4 and S5 plays an important role in translational accuracy. Interacts with and stabilizes bases of the 16S rRNA that are involved in tRNA selection in the A site and with the mRNA backbone. Located at the interface of the 30S and 50S subunits, it traverses the body of the 30S subunit contacting proteins on the other side and probably holding the rRNA structure together. The combined cluster of proteins S8, S12 and S17 appears to hold together the shoulder and platform of the 30S subunit. This Streptococcus equi subsp. zooepidemicus (strain H70) protein is Small ribosomal subunit protein uS12.